Here is a 61-residue protein sequence, read N- to C-terminus: Large ribosomal subunit protein bL28 (61 aa).

Residues 1–26 (MAKDYVTGKRTHFGNTRSHALNHSRR) are disordered.

The protein belongs to the bacterial ribosomal protein bL28 family.

This is Large ribosomal subunit protein bL28 from Lactiplantibacillus plantarum (strain ATCC BAA-793 / NCIMB 8826 / WCFS1) (Lactobacillus plantarum).